The chain runs to 341 residues: Phosphatidylserine decarboxylase proenzyme (341 aa).

Catalysis depends on charge relay system; for autoendoproteolytic cleavage activity residues Asp90, His147, and Ser254. The active-site Schiff-base intermediate with substrate; via pyruvic acid; for decarboxylase activity is the Ser254. Ser254 carries the post-translational modification Pyruvic acid (Ser); by autocatalysis. Residues 287–341 (RQDEQTPVVFPEGTELEENDAAQPPVAATSEPVQADGQNPAAEVSGQTGHKPDAP) are disordered.

This sequence belongs to the phosphatidylserine decarboxylase family. PSD-B subfamily. Prokaryotic type I sub-subfamily. As to quaternary structure, heterodimer of a large membrane-associated beta subunit and a small pyruvoyl-containing alpha subunit. It depends on pyruvate as a cofactor. Post-translationally, is synthesized initially as an inactive proenzyme. Formation of the active enzyme involves a self-maturation process in which the active site pyruvoyl group is generated from an internal serine residue via an autocatalytic post-translational modification. Two non-identical subunits are generated from the proenzyme in this reaction, and the pyruvate is formed at the N-terminus of the alpha chain, which is derived from the carboxyl end of the proenzyme. The autoendoproteolytic cleavage occurs by a canonical serine protease mechanism, in which the side chain hydroxyl group of the serine supplies its oxygen atom to form the C-terminus of the beta chain, while the remainder of the serine residue undergoes an oxidative deamination to produce ammonia and the pyruvoyl prosthetic group on the alpha chain. During this reaction, the Ser that is part of the protease active site of the proenzyme becomes the pyruvoyl prosthetic group, which constitutes an essential element of the active site of the mature decarboxylase.

The protein localises to the cell membrane. It carries out the reaction a 1,2-diacyl-sn-glycero-3-phospho-L-serine + H(+) = a 1,2-diacyl-sn-glycero-3-phosphoethanolamine + CO2. It functions in the pathway phospholipid metabolism; phosphatidylethanolamine biosynthesis; phosphatidylethanolamine from CDP-diacylglycerol: step 2/2. Functionally, catalyzes the formation of phosphatidylethanolamine (PtdEtn) from phosphatidylserine (PtdSer). This chain is Phosphatidylserine decarboxylase proenzyme, found in Pectobacterium atrosepticum (strain SCRI 1043 / ATCC BAA-672) (Erwinia carotovora subsp. atroseptica).